Consider the following 281-residue polypeptide: MIENRPWLTIFSHTMLILGIAVILFPLYVAFVAATLDKQAVYAAPMTLIPGTHLLENIHNIWVNGVGTNSAPFWRMLLNSFVMAFSITLGKITVSMLSAFAIVWFRFPLRNLFFWMIFITLMLPVEVRIFPTVEVIANLKMLDSYAGLTLPLMASAIATFLFRQFFMTLPDELVEAARIDGASPMRFFCDIVFPLSKTNLAALFVITFIYGWNQYLWPLLIITDVDLGTTVAGIKGMIATGEGTTEWNSVMAAMLLTLIPPVVIVLVMQRAFVRGLVDSEK.

Helical transmembrane passes span 16-36, 85-105, 113-133, 142-162, 202-222, and 247-267; these read LILG…AATL, FSIT…IVWF, FFWM…FPTV, LDSY…TFLF, ALFV…LLII, and WNSV…IVLV. The ABC transmembrane type-1 domain occupies 77–268; the sequence is LLNSFVMAFS…IPPVVIVLVM (192 aa).

This sequence belongs to the binding-protein-dependent transport system permease family. UgpAE subfamily. As to quaternary structure, the complex is composed of two ATP-binding proteins (UgpC), two transmembrane proteins (UgpA and UgpE) and a solute-binding protein (UgpB).

It is found in the cell inner membrane. Part of the ABC transporter complex UgpBAEC involved in sn-glycerol-3-phosphate (G3P) import. Probably responsible for the translocation of the substrate across the membrane. The protein is sn-glycerol-3-phosphate transport system permease protein UgpE (ugpE) of Shigella flexneri serotype 5b (strain 8401).